Reading from the N-terminus, the 385-residue chain is 5'-AMP-activated protein kinase catalytic subunit alpha-1 (385 aa).

The region spanning 1–229 (DGRVKIGHYI…IKDIREHEWF (229 aa)) is the Protein kinase domain. Phosphothreonine is present on threonine 14. An ATP-binding site is contributed by 15–22 (LGVGTFGK). Aspartate 100 serves as the catalytic Proton acceptor. Threonine 133 carries the post-translational modification Phosphothreonine; by LKB1 and CaMKK2. Phosphothreonine occurs at positions 219 and 276. The AIS stretch occupies residues 252 to 297 (EALKQDPLAVAYHLIIDNRDFYLATSPPDSFLDDHHLTRVPFLVAE). Position 277 is a phosphoserine (serine 277). Serine 281 carries the phosphoserine; by ULK1 modification. Threonine 289 is modified (phosphothreonine; by ULK1). The residue at position 298 (threonine 298) is a Phosphothreonine. A phosphoserine mark is found at serine 353 and serine 383.

It belongs to the protein kinase superfamily. CAMK Ser/Thr protein kinase family. SNF1 subfamily. AMPK is a heterotrimer of an alpha catalytic subunit (PRKAA1 or PRKAA2), a beta (PRKAB1 or PRKAB2) and a gamma non-catalytic subunits (PRKAG1, PRKAG2 or PRKAG3). Interacts with FNIP1 and FNIP2. Mg(2+) is required as a cofactor. Ubiquitinated. In terms of processing, phosphorylated at Thr-133 by STK11/LKB1 in complex with STE20-related adapter-alpha (STRADA) pseudo kinase and CAB39. Also phosphorylated at Thr-133 by CAMKK2; triggered by a rise in intracellular calcium ions, without detectable changes in the AMP/ATP ratio. CAMKK1 can also phosphorylate Thr-133, but at a much lower level. Dephosphorylated by protein phosphatase 2A and 2C (PP2A and PP2C). Phosphorylated by ULK1 and ULK2; leading to negatively regulate AMPK activity and suggesting the existence of a regulatory feedback loop between ULK1, ULK2 and AMPK. Dephosphorylated by PPM1A and PPM1B. Post-translationally, glycosylated; O-GlcNAcylated by OGT, promoting the AMP-activated protein kinase (AMPK) activity.

Its subcellular location is the cytoplasm. The protein localises to the nucleus. The enzyme catalyses L-seryl-[protein] + ATP = O-phospho-L-seryl-[protein] + ADP + H(+). It carries out the reaction L-threonyl-[protein] + ATP = O-phospho-L-threonyl-[protein] + ADP + H(+). The catalysed reaction is L-seryl-[acetyl-CoA carboxylase] + ATP = O-phospho-L-seryl-[acetyl-CoA carboxylase] + ADP + H(+). It catalyses the reaction L-seryl-[3-hydroxy-3-methylglutaryl-coenzyme A reductase] + ATP = O-phospho-L-seryl-[3-hydroxy-3-methylglutaryl-coenzyme A reductase] + ADP + H(+). The enzyme catalyses L-seryl-[tau protein] + ATP = O-phospho-L-seryl-[tau protein] + ADP + H(+). It carries out the reaction L-threonyl-[tau protein] + ATP = O-phospho-L-threonyl-[tau protein] + ADP + H(+). With respect to regulation, activated by phosphorylation on Thr-133. Binding of AMP to non-catalytic gamma subunit (PRKAG1, PRKAG2 or PRKAG3) results in allosteric activation, inducing phosphorylation on Thr-133. AMP-binding to gamma subunit also sustains activity by preventing dephosphorylation of Thr-133. ADP also stimulates Thr-133 phosphorylation, without stimulating already phosphorylated AMPK. ATP promotes dephosphorylation of Thr-133, rendering the enzyme inactive. Under physiological conditions AMPK mainly exists in its inactive form in complex with ATP, which is much more abundant than AMP. Selectively inhibited by compound C (6-[4-(2-Piperidin-1-yl-ethoxy)-phenyl)]-3-pyridin-4-yl-pyyrazolo[1,5-a] pyrimidine. Activated by resveratrol, a natural polyphenol present in red wine, and S17834, a synthetic polyphenol. In terms of biological role, catalytic subunit of AMP-activated protein kinase (AMPK), an energy sensor protein kinase that plays a key role in regulating cellular energy metabolism. In response to reduction of intracellular ATP levels, AMPK activates energy-producing pathways and inhibits energy-consuming processes: inhibits protein, carbohydrate and lipid biosynthesis, as well as cell growth and proliferation. AMPK acts via direct phosphorylation of metabolic enzymes, and by longer-term effects via phosphorylation of transcription regulators. Regulates lipid synthesis by phosphorylating and inactivating lipid metabolic enzymes such as ACACA, ACACB, GYS1, HMGCR and LIPE; regulates fatty acid and cholesterol synthesis by phosphorylating acetyl-CoA carboxylase (ACACA and ACACB) and hormone-sensitive lipase (LIPE) enzymes, respectively. Promotes lipolysis of lipid droplets by mediating phosphorylation of isoform 1 of CHKA (CHKalpha2). Regulates insulin-signaling and glycolysis by phosphorylating IRS1, PFKFB2 and PFKFB3. AMPK stimulates glucose uptake in muscle by increasing the translocation of the glucose transporter SLC2A4/GLUT4 to the plasma membrane, possibly by mediating phosphorylation of TBC1D4/AS160. Regulates transcription and chromatin structure by phosphorylating transcription regulators involved in energy metabolism such as CRTC2/TORC2, FOXO3, histone H2B, HDAC5, MEF2C, MLXIPL/ChREBP, EP300, HNF4A, p53/TP53, SREBF1, SREBF2 and PPARGC1A. Acts as a key regulator of glucose homeostasis in liver by phosphorylating CRTC2/TORC2, leading to CRTC2/TORC2 sequestration in the cytoplasm. In response to stress, phosphorylates 'Ser-36' of histone H2B (H2BS36ph), leading to promote transcription. Acts as a key regulator of cell growth and proliferation by phosphorylating FNIP1, TSC2, RPTOR, WDR24 and ATG1/ULK1: in response to nutrient limitation, negatively regulates the mTORC1 complex by phosphorylating RPTOR component of the mTORC1 complex and by phosphorylating and activating TSC2. Also phosphorylates and inhibits GATOR2 subunit WDR24 in response to nutrient limitation, leading to suppress glucose-mediated mTORC1 activation. In response to energetic stress, phosphorylates FNIP1, inactivating the non-canonical mTORC1 signaling, thereby promoting nuclear translocation of TFEB and TFE3, and inducing transcription of lysosomal or autophagy genes. In response to nutrient limitation, promotes autophagy by phosphorylating and activating ATG1/ULK1. In that process also activates WDR45/WIPI4. Phosphorylates CASP6, thereby preventing its autoprocessing and subsequent activation. In response to nutrient limitation, phosphorylates transcription factor FOXO3 promoting FOXO3 mitochondrial import. Also acts as a regulator of cellular polarity by remodeling the actin cytoskeleton; probably by indirectly activating myosin. AMPK also acts as a regulator of circadian rhythm by mediating phosphorylation of CRY1, leading to destabilize it. May regulate the Wnt signaling pathway by phosphorylating CTNNB1, leading to stabilize it. Also has tau-protein kinase activity: in response to amyloid beta A4 protein (APP) exposure, activated by CAMKK2, leading to phosphorylation of MAPT/TAU; however the relevance of such data remains unclear in vivo. Also phosphorylates CFTR, EEF2K, KLC1, NOS3 and SLC12A1. Regulates hepatic lipogenesis. Activated via SIRT3, represses sterol regulatory element-binding protein (SREBP) transcriptional activities and ATP-consuming lipogenesis to restore cellular energy balance. Upon stress, regulates mitochondrial fragmentation through phosphorylation of MTFR1L. This Sus scrofa (Pig) protein is 5'-AMP-activated protein kinase catalytic subunit alpha-1 (PRKAA1).